The chain runs to 395 residues: Phosphoglycerate kinase (395 aa).

Residues D21 to N23, R36, H59 to R62, R114, and R147 each bind substrate. ATP-binding positions include K197, E322, and G352–T355.

Belongs to the phosphoglycerate kinase family. Monomer.

The protein localises to the cytoplasm. It carries out the reaction (2R)-3-phosphoglycerate + ATP = (2R)-3-phospho-glyceroyl phosphate + ADP. The protein operates within carbohydrate degradation; glycolysis; pyruvate from D-glyceraldehyde 3-phosphate: step 2/5. This chain is Phosphoglycerate kinase, found in Roseobacter denitrificans (strain ATCC 33942 / OCh 114) (Erythrobacter sp. (strain OCh 114)).